The primary structure comprises 411 residues: MGMRARVPKVAHSTRRPPAARMWLPRFSSKTVTVLLLAQTTCLLLFIISRPGPSSPAGGEDRVHVLVLSSWRSGSSFLGQLFSQHPDVFYLMEPAWHVWTTLSQGSAATLHMAVRDLMRSIFLCDMDVFDAYMPQSRNLSAFFNWATSRALCSPPACSAFPRGTISKQDVCKTLCTRQPFSLAREACRSYSHVVLKEVRFFNLQVLYPLLSDPALNLRIVHLVRDPRAVLRSREAAGPILARDNGIVLGTNGKWVEADPHLRLIREVCRSHVRIAEAATLKPPPFLRGRYRLVRFEDLAREPLAEIRALYAFTGLTLTPQLEAWIHNITHGSGIGKPIEAFHTSSRNARNVSQAWRHALPFTKILRVQEVCAGALQLLGYRPVYSADQQRDLTLDLVLPRGPDHFSWASPD.

Residues 1–30 are Cytoplasmic-facing; sequence MGMRARVPKVAHSTRRPPAARMWLPRFSSK. A helical; Signal-anchor for type II membrane protein membrane pass occupies residues 31-48; the sequence is TVTVLLLAQTTCLLLFII. Residues 49–411 lie on the Lumenal side of the membrane; sequence SRPGPSSPAG…PDHFSWASPD (363 aa). 3'-phosphoadenylyl sulfate is bound at residue 71 to 77; sequence WRSGSSF. Residue Asn-138 is glycosylated (N-linked (GlcNAc...) asparagine). 224 to 232 lines the 3'-phosphoadenylyl sulfate pocket; sequence RDPRAVLRS. 2 N-linked (GlcNAc...) asparagine glycosylation sites follow: Asn-327 and Asn-350.

It belongs to the sulfotransferase 1 family. Gal/GlcNAc/GalNAc subfamily. As to expression, predominantly expressed in small and large intestines and colon. Weakly expressed in lymphocytes. Not expressed in other tissues. Down-regulated in colonic adenocarcinomas.

It is found in the golgi apparatus membrane. Functionally, sulfotransferase that utilizes 3'-phospho-5'-adenylyl sulfate (PAPS) as sulfonate donor to catalyze the transfer of sulfate to position 6 of non-reducing N-acetylglucosamine (GlcNAc) residues and O-linked sugars of mucin-type acceptors. Acts on the non-reducing terminal GlcNAc of short carbohydrate substrates. However, it does not transfer sulfate to longer carbohydrate substrates that have poly-N-acetyllactosamine structures. Has no activity toward keratan. Not involved in generating HEV-expressed ligands for SELL. Its substrate specificity may be influenced by its subcellular location. This chain is Carbohydrate sulfotransferase 5 (CHST5), found in Homo sapiens (Human).